Reading from the N-terminus, the 37-residue chain is Large ribosomal subunit protein bL36B (37 aa).

The protein belongs to the bacterial ribosomal protein bL36 family.

The sequence is that of Large ribosomal subunit protein bL36B from Kineococcus radiotolerans (strain ATCC BAA-149 / DSM 14245 / SRS30216).